The sequence spans 465 residues: Serine carboxypeptidase-like 19 (465 aa).

A signal peptide spans 1 to 23 (MRNLSFIVLFLLTLFFIHHLVDA). 77–79 (TGG) is a binding site for substrate. Intrachain disulfides connect Cys82–Cys353, Cys246–Cys260, and Cys284–Cys320. A glycan (N-linked (GlcNAc...) asparagine) is linked at Asn103. 177-179 (DSY) is a substrate binding site. Residue Ser178 is part of the active site. Residues 292-317 (DTPNIRTDRRRVMKEFSVNDSSSLPP) constitute a propeptide, linker peptide. Asn310 and Asn373 each carry an N-linked (GlcNAc...) asparagine glycan. The active site involves Asp389. Residue Asn405 is glycosylated (N-linked (GlcNAc...) asparagine). Residue 439 to 443 (KGGGH) coordinates substrate. His443 is an active-site residue.

This sequence belongs to the peptidase S10 family. Heterodimer. N-glycosylated. As to expression, expressed in roots and flowers, and at lower levels in young leaves and seedlings. Expressed in mature seeds and detected in expanding siliques.

Its subcellular location is the secreted. The enzyme catalyses 1-O-(trans-sinapoyl)-beta-D-glucose + choline = O-sinapoylcholine + D-glucose. Its activity is regulated as follows. Slightly inhibited by phenylmethylsulfonyl fluoride (PMSF). Involved in plants secondary metabolism. Functions as acyltransferase to form the sinapate ester sinapoylcholine also known as sinapine. Able to convert in vitro benzoylglucose into benzoylcholine. This Arabidopsis thaliana (Mouse-ear cress) protein is Serine carboxypeptidase-like 19.